Consider the following 252-residue polypeptide: Phosphonates import ATP-binding protein PhnC 1 (252 aa).

The 243-residue stretch at 2 to 244 (ISLNKLGVTY…QLEEIYQTLS (243 aa)) folds into the ABC transporter domain. 35–42 (GSSGAGKS) contacts ATP.

This sequence belongs to the ABC transporter superfamily. Phosphonates importer (TC 3.A.1.9.1) family. The complex is composed of two ATP-binding proteins (PhnC), two transmembrane proteins (PhnE) and a solute-binding protein (PhnD).

The protein resides in the cell inner membrane. It carries out the reaction phosphonate(out) + ATP + H2O = phosphonate(in) + ADP + phosphate + H(+). Part of the ABC transporter complex PhnCDE involved in phosphonates import. Responsible for energy coupling to the transport system. The protein is Phosphonates import ATP-binding protein PhnC 1 of Trichodesmium erythraeum (strain IMS101).